The chain runs to 490 residues: Cytochrome P450 monooxygenase aclL (490 aa).

The helical transmembrane segment at 1–21 (MLFSLGPLTIVYGLVIFVVAK) threads the bilayer. N176 carries an N-linked (GlcNAc...) asparagine glycan. C434 serves as a coordination point for heme.

The protein belongs to the cytochrome P450 family. It depends on heme as a cofactor.

It localises to the membrane. The protein operates within mycotoxin biosynthesis. Functionally, cytochrome P450 monooxygenase; part of the gene cluster that mediates the biosynthesis of aspirochlorine (or antibiotic A30641), an unusual halogenated spiro compound with distinctive antifungal properties due to selective inhibition of protein biosynthesis, and which is also active against bacteria, viruses, and murine tumor cells. The non-ribosomal peptide synthetase (NRPS) aclP is responsible the formation of the diketopiperazine (DKP) core from the condensation of 2 phenylalanine residues. One Phe residue is tailored into chlorotyrosine by hydroxylation and chlorination, whereas the second Phe undergoes an unprecedented C-C bond cleavage to be converted into glycine. After formation of the DKP, sulfur is incorporated into the DKP by conjugation with glutathione by aclG, followed by its stepwise degradation to the thiol by aclI, aclJ and aclK, and the dithiol oxidation by aclT. In addition, oxygenases (aclB, aclC, aclL and aclO) and O-methyltransferases (aclM and aclU) act as tailoring enzymes to produce the intermediate dechloroaspirochlorine. Ultimately, chlorination of dechloroaspirochlorine by the halogenase aclH is the last step in the aspirochlorine pathway. In Aspergillus oryzae (strain ATCC 42149 / RIB 40) (Yellow koji mold), this protein is Cytochrome P450 monooxygenase aclL.